The primary structure comprises 1017 residues: EMILIN-1 (1017 aa).

A signal peptide spans Met-1–Ala-21. The EMI domain occupies His-56 to Glu-133. 3 disulfides stabilise this stretch: Cys-60–Cys-123, Cys-87–Cys-94, and Cys-122–Cys-131. Disordered regions lie at residues Gly-134–Val-180 and Glu-259–Glu-289. Residues Arg-154–Ser-167 are compositionally biased toward low complexity. The N-linked (GlcNAc...) asparagine glycan is linked to Asn-156. 3 coiled-coil regions span residues Gly-171 to Asp-211, Glu-237 to His-266, and Leu-310 to Thr-374. A disordered region spans residues Arg-383–Ser-403. Gly residues predominate over residues Glu-387–Pro-398. 4 N-linked (GlcNAc...) asparagine glycosylation sites follow: Asn-416, Asn-456, Asn-562, and Asn-659. A coiled-coil region spans residues Leu-519 to Gly-573. Positions Leu-676–Ala-697 form a coiled coil. N-linked (GlcNAc...) asparagine glycosylation is found at Asn-767 and Asn-795. The stretch at Arg-789–Ser-809 forms a coiled coil. The segment covering Lys-811–Ala-820 has biased composition (low complexity). Positions Lys-811 to Ala-866 are disordered. The Collagen-like domain occupies Gly-815 to Pro-865. Residues Pro-822–Pro-841 show a composition bias toward pro residues. The span at Lys-843 to Ala-866 shows a compositional bias: low complexity. In terms of domain architecture, C1q spans Ala-867–Leu-1014.

Homotrimer associated through a moderately stable interaction of the C-terminal globular C1q domains, allowing the nucleation of the triple helix and then a further quaternary assembly to higher-order polymers via intermolecular disulfide bonds. Interacts with EMILIN2. Interacts with EFEMP2; this interaction promotes the incorporation of EFEMP2 into the extracellular matrix.

Its subcellular location is the secreted. The protein resides in the extracellular space. It localises to the extracellular matrix. Its function is as follows. Involved in elastic and collagen fibers formation. It is required for EFEMP2 deposition into the extracellular matrix, and collagen network assembly and cross-linking via protein-lysine 6-oxidase/LOX activity. May be responsible for anchoring smooth muscle cells to elastic fibers, and may be involved the processes that regulate vessel assembly. Has cell adhesive capacity. May have a function in placenta formation and initial organogenesis and a later role in interstitial connective tissue. The polypeptide is EMILIN-1 (Emilin1) (Mus musculus (Mouse)).